Reading from the N-terminus, the 505-residue chain is Catalase (505 aa).

Residues 1–25 (MSRQDKKLTGVFGHPVSDRENSMTA) are disordered. Active-site residues include His56 and Asn129. Tyr339 provides a ligand contact to heme.

The protein belongs to the catalase family. Homodimer. It depends on heme as a cofactor.

The catalysed reaction is 2 H2O2 = O2 + 2 H2O. In terms of biological role, decomposes hydrogen peroxide into water and oxygen; serves to protect cells from the toxic effects of hydrogen peroxide. The chain is Catalase (katA) from Staphylococcus aureus (strain MRSA252).